Reading from the N-terminus, the 473-residue chain is Suppressor of SWI4 1 homolog (473 aa).

A Brix domain is found at 29 to 292 (PHSFVFTRGC…LIKVQEGVGE (264 aa)). Phosphoserine is present on residues Ser238 and Ser240. Positions 323 to 473 (AQRQAQQAQN…GRGRPRKRVA (151 aa)) are disordered. Residues 324–334 (QRQAQQAQNVQ) show a composition bias toward low complexity. The segment covering 335–360 (RKQEQREAHRKKSLEGMKKARVRGGD) has biased composition (basic and acidic residues). Positions 376-388 (GEDDDEQEDDDIE) are enriched in acidic residues. The segment covering 407–421 (KRKRLAKSPGQKRKR) has biased composition (basic residues). Residues 422–444 (REMDRGRGRLCDQKFPKPKDKSH) show a composition bias toward basic and acidic residues. Position 438 is an N6-acetyllysine (Lys438). Residues 464-473 (GRGRPRKRVA) show a composition bias toward basic residues.

It is found in the nucleus. The protein resides in the nucleolus. Its function is as follows. May have a role in cell growth. In Pongo abelii (Sumatran orangutan), this protein is Suppressor of SWI4 1 homolog (PPAN).